We begin with the raw amino-acid sequence, 200 residues long: Putative 3-methyladenine DNA glycosylase (200 aa).

It belongs to the DNA glycosylase MPG family.

The polypeptide is Putative 3-methyladenine DNA glycosylase (Bradyrhizobium diazoefficiens (strain JCM 10833 / BCRC 13528 / IAM 13628 / NBRC 14792 / USDA 110)).